Reading from the N-terminus, the 224-residue chain is Ribose-5-phosphate isomerase A (224 aa).

Substrate-binding positions include 33 to 36 (TGST), 86 to 89 (DGAD), and 99 to 102 (KGGG). The Proton acceptor role is filled by Glu108. Lys126 is a binding site for substrate.

Belongs to the ribose 5-phosphate isomerase family. Homodimer.

The catalysed reaction is aldehydo-D-ribose 5-phosphate = D-ribulose 5-phosphate. It functions in the pathway carbohydrate degradation; pentose phosphate pathway; D-ribose 5-phosphate from D-ribulose 5-phosphate (non-oxidative stage): step 1/1. Functionally, catalyzes the reversible conversion of ribose-5-phosphate to ribulose 5-phosphate. The protein is Ribose-5-phosphate isomerase A of Bordetella avium (strain 197N).